Consider the following 381-residue polypeptide: NF-kappa-B inhibitor-like protein 1 (381 aa).

The interval 1-34 (MSNPSPQAPEEEASTSVCRPQSCSMASASRRHRR) is disordered. A compositionally biased stretch (polar residues) spans 14 to 27 (STSVCRPQSCSMAS). ANK repeat units follow at residues 64 to 93 (AGQPPPLHRACARHDAPALCLLLRLGADPA) and 97 to 134 (RHGDTALHAAARQGPDAYTDFFLPLLSRCPSAMGIKNK). Disordered stretches follow at residues 132-167 (KNKDGETPGQILGWGPPWDSAEEEEDEEVSKEREWR) and 186-298 (EDDA…WRFG). S151 is modified (phosphoserine). Acidic residues predominate over residues 151–160 (SAEEEEDEEV). 2 stretches are compositionally biased toward basic and acidic residues: residues 205–218 (RLAREHAQKQRQQL) and 237–290 (RQHE…RGAE).

In terms of assembly, interacts with CACTIN (via N-terminal domain); the interaction occurs in a pro-inflammatory-independent manner. High expression found in heart muscle, liver, kidney and skin. Not detected in spleen, lung and brain.

It is found in the nucleus. In terms of biological role, involved in the regulation of innate immune response. Acts as negative regulator of Toll-like receptor and interferon-regulatory factor (IRF) signaling pathways. Contributes to the negative regulation of transcriptional activation of NF-kappa-B target genes in response to endogenous pro-inflammatory stimuli. This is NF-kappa-B inhibitor-like protein 1 (Nfkbil1) from Mus musculus (Mouse).